The chain runs to 490 residues: ATP synthase subunit beta, chloroplastic (490 aa).

169-176 contributes to the ATP binding site; that stretch reads GGAGVGKT.

The protein belongs to the ATPase alpha/beta chains family. In terms of assembly, F-type ATPases have 2 components, CF(1) - the catalytic core - and CF(0) - the membrane proton channel. CF(1) has five subunits: alpha(3), beta(3), gamma(1), delta(1), epsilon(1). CF(0) has four main subunits: a(1), b(1), b'(1) and c(9-12).

The protein localises to the plastid. It localises to the chloroplast thylakoid membrane. It carries out the reaction ATP + H2O + 4 H(+)(in) = ADP + phosphate + 5 H(+)(out). Its function is as follows. Produces ATP from ADP in the presence of a proton gradient across the membrane. The catalytic sites are hosted primarily by the beta subunits. The sequence is that of ATP synthase subunit beta, chloroplastic from Cyanidium caldarium (Red alga).